We begin with the raw amino-acid sequence, 449 residues long: NADH-quinone oxidoreductase subunit D (449 aa).

Belongs to the complex I 49 kDa subunit family. In terms of assembly, NDH-1 is composed of 14 different subunits. Subunits NuoB, C, D, E, F, and G constitute the peripheral sector of the complex.

It localises to the cell membrane. The enzyme catalyses a quinone + NADH + 5 H(+)(in) = a quinol + NAD(+) + 4 H(+)(out). In terms of biological role, NDH-1 shuttles electrons from NADH, via FMN and iron-sulfur (Fe-S) centers, to quinones in the respiratory chain. The immediate electron acceptor for the enzyme in this species is believed to be a menaquinone. Couples the redox reaction to proton translocation (for every two electrons transferred, four hydrogen ions are translocated across the cytoplasmic membrane), and thus conserves the redox energy in a proton gradient. The sequence is that of NADH-quinone oxidoreductase subunit D from Saccharopolyspora erythraea (strain ATCC 11635 / DSM 40517 / JCM 4748 / NBRC 13426 / NCIMB 8594 / NRRL 2338).